The chain runs to 361 residues: Chorismate synthase (361 aa).

The NADP(+) site is built by arginine 48 and arginine 54. Residues 125 to 127, 238 to 239, glycine 278, 293 to 297, and arginine 319 contribute to the FMN site; these read RSS, NA, and KPTSS.

Belongs to the chorismate synthase family. Homotetramer. FMNH2 serves as cofactor.

It catalyses the reaction 5-O-(1-carboxyvinyl)-3-phosphoshikimate = chorismate + phosphate. It participates in metabolic intermediate biosynthesis; chorismate biosynthesis; chorismate from D-erythrose 4-phosphate and phosphoenolpyruvate: step 7/7. In terms of biological role, catalyzes the anti-1,4-elimination of the C-3 phosphate and the C-6 proR hydrogen from 5-enolpyruvylshikimate-3-phosphate (EPSP) to yield chorismate, which is the branch point compound that serves as the starting substrate for the three terminal pathways of aromatic amino acid biosynthesis. This reaction introduces a second double bond into the aromatic ring system. The sequence is that of Chorismate synthase from Salmonella typhi.